A 327-amino-acid polypeptide reads, in one-letter code: Transaldolase (327 aa).

The active-site Schiff-base intermediate with substrate is the K132.

The protein belongs to the transaldolase family. Type 1 subfamily. Homodimer.

Its subcellular location is the cytoplasm. It catalyses the reaction D-sedoheptulose 7-phosphate + D-glyceraldehyde 3-phosphate = D-erythrose 4-phosphate + beta-D-fructose 6-phosphate. Its pathway is carbohydrate degradation; pentose phosphate pathway; D-glyceraldehyde 3-phosphate and beta-D-fructose 6-phosphate from D-ribose 5-phosphate and D-xylulose 5-phosphate (non-oxidative stage): step 2/3. Functionally, transaldolase is important for the balance of metabolites in the pentose-phosphate pathway. In Chlamydia caviae (strain ATCC VR-813 / DSM 19441 / 03DC25 / GPIC) (Chlamydophila caviae), this protein is Transaldolase.